The primary structure comprises 190 residues: Vexin (190 aa).

Positions 88-156 are disordered; that stretch reads AEKKASRFSR…DEATLPLTAH (69 aa). The span at 117 to 133 shows a compositional bias: polar residues; that stretch reads TDKQNAPTVPASPSSYE. Basic and acidic residues predominate over residues 136-149; that stretch reads GCREQRPENPKDEA.

Belongs to the vexin family. In terms of tissue distribution, expressed in differentiating progenitors in the developing central nervous system (CNS).

The protein resides in the cell membrane. The protein localises to the nucleus. Its function is as follows. Required for neurogenesis in the neural plate and retina. Cooperates with cell cycle inhibitor cdknx/p27(xic1) to enhance neurogenesis and increase the levels of the neuronal determination factor neurog2/X-ngngr-1. In Xenopus laevis (African clawed frog), this protein is Vexin.